The following is a 555-amino-acid chain: Glutamate--tRNA ligase (555 aa).

The 'HIGH' region motif lies at 100-110 (PNPSGPLHIGH).

It belongs to the class-I aminoacyl-tRNA synthetase family. Glutamate--tRNA ligase type 2 subfamily.

The protein resides in the cytoplasm. The enzyme catalyses tRNA(Glu) + L-glutamate + ATP = L-glutamyl-tRNA(Glu) + AMP + diphosphate. In terms of biological role, catalyzes the attachment of glutamate to tRNA(Glu) in a two-step reaction: glutamate is first activated by ATP to form Glu-AMP and then transferred to the acceptor end of tRNA(Glu). This Methanococcus maripaludis (strain C7 / ATCC BAA-1331) protein is Glutamate--tRNA ligase.